The chain runs to 1374 residues: DNA-directed RNA polymerase subunit beta' (1374 aa).

Positions Met1–Phe47 are disordered. A compositionally biased stretch (basic residues) spans Lys7–Ala28. Low complexity predominate over residues Ala29–Ala39. The Zn(2+) site is built by Cys258, Cys325, Cys332, and Cys335. The tract at residues Arg1344 to Glu1374 is disordered. Low complexity predominate over residues Leu1362–Glu1374.

This sequence belongs to the RNA polymerase beta' chain family. RpoC2 subfamily. As to quaternary structure, in cyanobacteria the RNAP catalytic core is composed of 2 alpha, 1 beta, 1 beta', 1 gamma and 1 omega subunit. When a sigma factor is associated with the core the holoenzyme is formed, which can initiate transcription. Requires Zn(2+) as cofactor.

The catalysed reaction is RNA(n) + a ribonucleoside 5'-triphosphate = RNA(n+1) + diphosphate. DNA-dependent RNA polymerase catalyzes the transcription of DNA into RNA using the four ribonucleoside triphosphates as substrates. This is DNA-directed RNA polymerase subunit beta' from Prochlorococcus marinus (strain MIT 9313).